The following is a 179-amino-acid chain: Repressor of phase 1 flagellin gene (179 aa).

In terms of biological role, transcriptional repressor of the FliC phase-1 flagellin. This chain is Repressor of phase 1 flagellin gene (fljA), found in Salmonella abony.